Reading from the N-terminus, the 377-residue chain is Phospho-N-acetylmuramoyl-pentapeptide-transferase (377 aa).

The next 11 membrane-spanning stretches (helical) occupy residues 9–29, 62–82, 85–105, 122–142, 155–175, 178–198, 210–230, 247–267, 274–294, 299–319, and 354–374; these read YITL…LVAG, MGGA…ADWI, FVWV…MDDY, FFWQ…AVSA, WVGS…VPFF, VSYP…IVGT, GLAI…AYVV, AAEL…FLWF, VFMG…IAVI, IVLF…MVQV, and QVVV…LSTL.

It belongs to the glycosyltransferase 4 family. MraY subfamily. It depends on Mg(2+) as a cofactor.

It is found in the cell inner membrane. The catalysed reaction is UDP-N-acetyl-alpha-D-muramoyl-L-alanyl-gamma-D-glutamyl-meso-2,6-diaminopimeloyl-D-alanyl-D-alanine + di-trans,octa-cis-undecaprenyl phosphate = di-trans,octa-cis-undecaprenyl diphospho-N-acetyl-alpha-D-muramoyl-L-alanyl-D-glutamyl-meso-2,6-diaminopimeloyl-D-alanyl-D-alanine + UMP. It participates in cell wall biogenesis; peptidoglycan biosynthesis. In terms of biological role, catalyzes the initial step of the lipid cycle reactions in the biosynthesis of the cell wall peptidoglycan: transfers peptidoglycan precursor phospho-MurNAc-pentapeptide from UDP-MurNAc-pentapeptide onto the lipid carrier undecaprenyl phosphate, yielding undecaprenyl-pyrophosphoryl-MurNAc-pentapeptide, known as lipid I. This Bordetella parapertussis (strain 12822 / ATCC BAA-587 / NCTC 13253) protein is Phospho-N-acetylmuramoyl-pentapeptide-transferase.